Reading from the N-terminus, the 70-residue chain is MTTVRVKENEPFDVALRRFKRTIEKIGLLTDLRAREFYEKPTAERKRKKAAAVKRHFKRVRSMQLPKKLY.

It belongs to the bacterial ribosomal protein bS21 family.

The protein is Small ribosomal subunit protein bS21 of Methylibium petroleiphilum (strain ATCC BAA-1232 / LMG 22953 / PM1).